Here is a 250-residue protein sequence, read N- to C-terminus: Acidic leucine-rich nuclear phosphoprotein 32 family member E (250 aa).

Ser-8 carries the post-translational modification Phosphoserine. LRR repeat units follow at residues 43–64 (ELEF…PSLP), 65–87 (KLRK…AEKC), and 89–110 (NLTY…EALQ). The LRRCT domain occupies 123–161 (CEITTLEDYRESIFELLPQVTYLDGFDAEDNEAPDSEAD). 3 stretches are compositionally biased toward acidic residues: residues 149–171 (DAED…DGDE), 178–191 (EYEE…EGSE), and 205–227 (IQDE…EEEA). Positions 149–250 (DAEDNEAPDS…EGEDDDEDDD (102 aa)) are disordered. The interval 194–247 (EVGLSYLMKEDIQDEEDDDDYVEEEEEEGGEEEADVRGEKRKREAEDEGEDDDE) is ZID domain. Over residues 228 to 238 (DVRGEKRKREA) the composition is skewed to basic and acidic residues. Residues 239–250 (EDEGEDDDEDDD) show a composition bias toward acidic residues.

Belongs to the ANP32 family. As to quaternary structure, component of a SWR1-like complex. Interacts with H2A.Z/H2AZ1. In terms of processing, phosphorylated. The phosphorylation is nuclear localization signal (NLS)-dependent.

It localises to the cytoplasm. It is found in the nucleus. Its function is as follows. Histone chaperone that specifically mediates the genome-wide removal of histone H2A.Z/H2AZ1 from the nucleosome: removes H2A.Z/H2AZ1 from its normal sites of deposition, especially from enhancer and insulator regions. Not involved in deposition of H2A.Z/H2AZ1 in the nucleosome. May stabilize the evicted H2A.Z/H2AZ1-H2B dimer, thus shifting the equilibrium towards dissociation and the off-chromatin state. Inhibits activity of protein phosphatase 2A (PP2A). Does not inhibit protein phosphatase 1. May play a role in cerebellar development and synaptogenesis. The polypeptide is Acidic leucine-rich nuclear phosphoprotein 32 family member E (anp32e) (Danio rerio (Zebrafish)).